The sequence spans 29 residues: Cytochrome b6-f complex subunit 8 (29 aa).

Residues I3–V23 traverse the membrane as a helical segment.

It belongs to the PetN family. As to quaternary structure, the 4 large subunits of the cytochrome b6-f complex are cytochrome b6, subunit IV (17 kDa polypeptide, PetD), cytochrome f and the Rieske protein, while the 4 small subunits are PetG, PetL, PetM and PetN. The complex functions as a dimer.

The protein resides in the plastid. The protein localises to the chloroplast thylakoid membrane. In terms of biological role, component of the cytochrome b6-f complex, which mediates electron transfer between photosystem II (PSII) and photosystem I (PSI), cyclic electron flow around PSI, and state transitions. This Solanum bulbocastanum (Wild potato) protein is Cytochrome b6-f complex subunit 8.